The primary structure comprises 323 residues: Penicillopepsin-1 (323 aa).

A glycan (O-linked (Man...) serine) is linked at S3. The O-linked (Man...) threonine glycan is linked to T7. Positions 17–320 (YITPVTIGGT…DSDGPQLGFA (304 aa)) constitute a Peptidase A1 domain. Residues D33 and D213 contribute to the active site. A disulfide bridge connects residues C249 and C283.

This sequence belongs to the peptidase A1 family. Monomer.

The protein localises to the secreted. It catalyses the reaction Hydrolysis of proteins with broad specificity similar to that of pepsin A, preferring hydrophobic residues at P1 and P1', but also cleaving 20-Gly-|-Glu-21 in the B chain of insulin. Clots milk, and activates trypsinogen.. Its function is as follows. Secreted aspartic endopeptidase that allows assimilation of proteinaceous substrates. The scissile peptide bond is attacked by a nucleophilic water molecule activated by two aspartic residues in the active site. Shows a broad primary substrate specificity. Favors hydrophobic residues at the P1 and P1' positions, but can also activate trypsinogen and hydrolyze the B chain of insulin between positions 'Gly-20' and 'Glu-21'. In Penicillium janthinellum (Penicillium vitale), this protein is Penicillopepsin-1.